Reading from the N-terminus, the 462-residue chain is Arginine biosynthesis bifunctional protein ArgJ, mitochondrial (462 aa).

Residues threonine 189, lysine 215, threonine 236, glutamate 327, asparagine 457, and serine 462 each contribute to the substrate site. The active-site Nucleophile is the threonine 236.

Belongs to the ArgJ family. Heterodimer of an alpha and a beta chain. The alpha and beta chains are autoproteolytically processed from a single precursor protein within the mitochondrion.

It localises to the mitochondrion matrix. The catalysed reaction is N(2)-acetyl-L-ornithine + L-glutamate = N-acetyl-L-glutamate + L-ornithine. It catalyses the reaction L-glutamate + acetyl-CoA = N-acetyl-L-glutamate + CoA + H(+). It participates in amino-acid biosynthesis; L-arginine biosynthesis; L-ornithine and N-acetyl-L-glutamate from L-glutamate and N(2)-acetyl-L-ornithine (cyclic): step 1/1. Its pathway is amino-acid biosynthesis; L-arginine biosynthesis; N(2)-acetyl-L-ornithine from L-glutamate: step 1/4. In terms of biological role, catalyzes two activities which are involved in the cyclic version of arginine biosynthesis: the synthesis of acetylglutamate from glutamate and acetyl-CoA, and of ornithine by transacetylation between acetylornithine and glutamate. This is Arginine biosynthesis bifunctional protein ArgJ, mitochondrial from Postia placenta (strain ATCC 44394 / Madison 698-R) (Brown rot fungus).